We begin with the raw amino-acid sequence, 461 residues long: Photosystem II CP43 reaction center protein (461 aa).

The propeptide occupies 1–2 (ME). An N-acetylthreonine modification is found at Thr3. At Thr3 the chain carries Phosphothreonine. The next 5 membrane-spanning stretches (helical) occupy residues 57–81 (LFEV…PHLA), 122–143 (LLGP…KDRN), 166–188 (KALY…RKIT), 243–263 (KPFA…LSYS), and 279–300 (WFNN…ASQA). Residue Glu355 participates in [CaMn4O5] cluster binding. A helical membrane pass occupies residues 435 to 459 (RARAAAAGFEKGIDRDFEPVLSMTP).

The protein belongs to the PsbB/PsbC family. PsbC subfamily. In terms of assembly, PSII is composed of 1 copy each of membrane proteins PsbA, PsbB, PsbC, PsbD, PsbE, PsbF, PsbH, PsbI, PsbJ, PsbK, PsbL, PsbM, PsbT, PsbX, PsbY, PsbZ, Psb30/Ycf12, at least 3 peripheral proteins of the oxygen-evolving complex and a large number of cofactors. It forms dimeric complexes. It depends on Binds multiple chlorophylls and provides some of the ligands for the Ca-4Mn-5O cluster of the oxygen-evolving complex. It may also provide a ligand for a Cl- that is required for oxygen evolution. PSII binds additional chlorophylls, carotenoids and specific lipids. as a cofactor.

The protein resides in the plastid. The protein localises to the chloroplast thylakoid membrane. In terms of biological role, one of the components of the core complex of photosystem II (PSII). It binds chlorophyll and helps catalyze the primary light-induced photochemical processes of PSII. PSII is a light-driven water:plastoquinone oxidoreductase, using light energy to abstract electrons from H(2)O, generating O(2) and a proton gradient subsequently used for ATP formation. In Gossypium barbadense (Sea Island cotton), this protein is Photosystem II CP43 reaction center protein.